The following is an 87-amino-acid chain: Small ribosomal subunit protein uS17 (87 aa).

This sequence belongs to the universal ribosomal protein uS17 family. In terms of assembly, part of the 30S ribosomal subunit.

One of the primary rRNA binding proteins, it binds specifically to the 5'-end of 16S ribosomal RNA. In Thiobacillus denitrificans (strain ATCC 25259 / T1), this protein is Small ribosomal subunit protein uS17.